A 585-amino-acid chain; its full sequence is Amyloid protein-binding protein 2 (585 aa).

TPR repeat units lie at residues 50–83 (QGRL…HHCF), 120–153 (IQVG…CTLH), 206–239 (AALY…ITSG), 288–321 (SDTL…RQSV), 333–367 (HEDL…ITHI), 429–462 (AKHY…KEQL), 471–505 (ALSV…GKKL), and 514–547 (EYDY…NRLR).

Component of a CRL2 E3 ubiquitin-protein ligase complex, also named ECS (Elongin BC-CUL2/5-SOCS-box protein) complex, composed of CUL2, Elongin BC (ELOB and ELOC), RBX1 and substrate-specific adapter APPBP2. Interacts with APP; APP interaction inhibits the E3 ubiquitin-protein ligase activity of the CRL2(APPBP2) complex. Rapidly degraded by the proteasome upon overexpression of a C-terminal fragment of APP.

It localises to the nucleus. It is found in the cytoplasm. The protein resides in the cytoskeleton. Its subcellular location is the membrane. Its pathway is protein modification; protein ubiquitination. With respect to regulation, E3 ubiquitin-protein ligase activity of the CRL2(APPBP2) complex is inhibited by APP. Its function is as follows. Substrate-recognition component of a Cul2-RING (CRL2) E3 ubiquitin-protein ligase complex of the DesCEND (destruction via C-end degrons) pathway, which recognizes a C-degron located at the extreme C terminus of target proteins, leading to their ubiquitination and degradation. The C-degron recognized by the DesCEND pathway is usually a motif of less than ten residues and can be present in full-length proteins, truncated proteins or proteolytically cleaved forms. The CRL2(APPBP2) complex specifically recognizes proteins with a -Arg-Xaa-Xaa-Gly degron at the C-terminus, leading to their ubiquitination and degradation. The CRL2(APPBP2) complex mediates ubiquitination and degradation of truncated SELENOV selenoproteins produced by failed UGA/Sec decoding, which end with a -Arg-Xaa-Xaa-Gly degron. May play a role in intracellular protein transport: may be involved in the translocation of APP along microtubules toward the cell surface. The protein is Amyloid protein-binding protein 2 of Rattus norvegicus (Rat).